Here is a 204-residue protein sequence, read N- to C-terminus: Shikimate kinase (204 aa).

35 to 40 (ASGKST) provides a ligand contact to ATP. Mg(2+) is bound at residue Ser-39. Substrate-binding residues include Asp-57, Arg-81, and Gly-103. Arg-142 provides a ligand contact to ATP. Arg-169 lines the substrate pocket.

It belongs to the shikimate kinase family. As to quaternary structure, monomer. The cofactor is Mg(2+).

The protein resides in the cytoplasm. The enzyme catalyses shikimate + ATP = 3-phosphoshikimate + ADP + H(+). Its pathway is metabolic intermediate biosynthesis; chorismate biosynthesis; chorismate from D-erythrose 4-phosphate and phosphoenolpyruvate: step 5/7. In terms of biological role, catalyzes the specific phosphorylation of the 3-hydroxyl group of shikimic acid using ATP as a cosubstrate. This Salinibacter ruber (strain DSM 13855 / M31) protein is Shikimate kinase.